Reading from the N-terminus, the 307-residue chain is Alpha N-terminal protein methyltransferase 1 (307 aa).

Low complexity predominate over residues 38–51; sequence EPAPAPAAGSNGVA. The segment at 38–60 is disordered; it reads EPAPAPAAGSNGVAGEEEAGGGG. Residues glycine 123, arginine 128, 145 to 147, 179 to 180, and glutamine 195 each bind S-adenosyl-L-methionine; these read EPV and LQ.

The protein belongs to the methyltransferase superfamily. NTM1 family.

It catalyses the reaction N-terminal L-alanyl-L-prolyl-L-lysyl-[protein] + 3 S-adenosyl-L-methionine = N-terminal N,N,N-trimethyl-L-alanyl-L-prolyl-L-lysyl-[protein] + 3 S-adenosyl-L-homocysteine + 3 H(+). The enzyme catalyses N-terminal L-seryl-L-prolyl-L-lysyl-[protein] + 3 S-adenosyl-L-methionine = N-terminal N,N,N-trimethyl-L-seryl-L-prolyl-L-lysyl-[protein] + 3 S-adenosyl-L-homocysteine + 3 H(+). The catalysed reaction is N-terminal L-prolyl-L-prolyl-L-lysyl-[protein] + 2 S-adenosyl-L-methionine = N-terminal N,N-dimethyl-L-prolyl-L-prolyl-L-lysyl-[protein] + 2 S-adenosyl-L-homocysteine + 2 H(+). Alpha-N-methyltransferase that methylates the N-terminus of target proteins containing the N-terminal motif [Ala/Pro/Ser]-Pro-Lys when the initiator Met is cleaved. Specifically catalyzes mono-, di- or tri-methylation of exposed alpha-amino group of Ala or Ser residue in the [Ala/Ser]-Pro-Lys motif and mono- or di-methylation of Pro in the Pro-Pro-Lys motif. The chain is Alpha N-terminal protein methyltransferase 1 from Oryza sativa subsp. japonica (Rice).